We begin with the raw amino-acid sequence, 250 residues long: Triosephosphate isomerase (250 aa).

9-11 (NWK) provides a ligand contact to substrate. Residue histidine 94 is the Electrophile of the active site. Catalysis depends on glutamate 166, which acts as the Proton acceptor. Substrate-binding positions include glycine 172, serine 211, and 232-233 (GG).

The protein belongs to the triosephosphate isomerase family. In terms of assembly, homodimer.

It localises to the cytoplasm. It carries out the reaction D-glyceraldehyde 3-phosphate = dihydroxyacetone phosphate. Its pathway is carbohydrate biosynthesis; gluconeogenesis. The protein operates within carbohydrate degradation; glycolysis; D-glyceraldehyde 3-phosphate from glycerone phosphate: step 1/1. In terms of biological role, involved in the gluconeogenesis. Catalyzes stereospecifically the conversion of dihydroxyacetone phosphate (DHAP) to D-glyceraldehyde-3-phosphate (G3P). The sequence is that of Triosephosphate isomerase from Methylococcus capsulatus (strain ATCC 33009 / NCIMB 11132 / Bath).